Reading from the N-terminus, the 401-residue chain is Protein zntC (401 aa).

3 consecutive transmembrane segments (helical) span residues 33-53 (GGLIAGIFVLTLTASFVPWFL), 61-81 (LVSVVSILTCLSAGVIIGAGF), and 114-134 (ITIVTMFALICVDKILVSGGL). The segment at 141–247 (NHMDLSQHNH…SHKDEKDSEK (107 aa)) is disordered. The span at 167–184 (GDDDDDDVNEDQEEDSTK) shows a compositional bias: acidic residues. The segment covering 200-209 (HNSSNSSSNG) has biased composition (low complexity). Residues 212 to 225 (HGLKKKKKSKKEHG) are compositionally biased toward basic residues. Positions 226 to 247 (HGHNHDHSSNGHSHKDEKDSEK) are enriched in basic and acidic residues. 5 helical membrane passes run 256 to 276 (AWVFLVALSLHSIFDGLGLGS), 285 to 305 (GLLIAVLAHKFLDGLVLGIAI), 316 to 336 (CIALVFAAAMTPLGIGIGMAI), 351 to 371 (GIILSITCGSFIYISLIELLP), and 381 to 401 (KLKLAVAFLGYSVMAILALWV).

The protein belongs to the ZIP transporter (TC 2.A.5) family.

Its subcellular location is the membrane. In terms of biological role, may transport divalent cations. May participate, with dstA, in the regulation of the differentiation of stalk cells during development. The sequence is that of Protein zntC (zntC) from Dictyostelium discoideum (Social amoeba).